The sequence spans 325 residues: Alkanal monooxygenase beta chain (325 aa).

It belongs to the bacterial luciferase oxidoreductase family. Heterodimer of an alpha and a beta chain.

The catalysed reaction is a long-chain fatty aldehyde + FMNH2 + O2 = a long-chain fatty acid + hnu + FMN + H2O + 2 H(+). Its function is as follows. Light-emitting reaction in luminous bacteria. The specific role of the beta subunit is unknown, but it is absolutely required for bioluminescence activity. The polypeptide is Alkanal monooxygenase beta chain (luxB) (Photobacterium leiognathi).